Here is a 332-residue protein sequence, read N- to C-terminus: 2,3-diketo-L-gulonate reductase (332 aa).

The active-site Proton donor is the His44. NAD(+) contacts are provided by residues 168–174, 224–225, and 304–306; these read ITMVDMS, WK, and GHE.

The protein belongs to the LDH2/MDH2 oxidoreductase family. DlgD subfamily. Homodimer.

The protein localises to the cytoplasm. It catalyses the reaction 3-dehydro-L-gulonate + NAD(+) = 2,3-dioxo-L-gulonate + NADH + H(+). It carries out the reaction 3-dehydro-L-gulonate + NADP(+) = 2,3-dioxo-L-gulonate + NADPH + H(+). Functionally, catalyzes the reduction of 2,3-diketo-L-gulonate in the presence of NADH, to form 3-keto-L-gulonate. The polypeptide is 2,3-diketo-L-gulonate reductase (Salmonella heidelberg (strain SL476)).